An 89-amino-acid polypeptide reads, in one-letter code: Small ribosomal subunit protein uS15 (89 aa).

The protein belongs to the universal ribosomal protein uS15 family. In terms of assembly, part of the 30S ribosomal subunit. Forms a bridge to the 50S subunit in the 70S ribosome, contacting the 23S rRNA.

Functionally, one of the primary rRNA binding proteins, it binds directly to 16S rRNA where it helps nucleate assembly of the platform of the 30S subunit by binding and bridging several RNA helices of the 16S rRNA. Forms an intersubunit bridge (bridge B4) with the 23S rRNA of the 50S subunit in the ribosome. This is Small ribosomal subunit protein uS15 from Staphylococcus epidermidis (strain ATCC 12228 / FDA PCI 1200).